The chain runs to 259 residues: Large ribosomal subunit protein uL2m (259 aa).

Positions 234–259 are disordered; it reads VAMNPVDHPNGGRTKTPKPERSPGVE. A compositionally biased stretch (basic and acidic residues) spans 250-259; the sequence is PKPERSPGVE.

This sequence belongs to the universal ribosomal protein uL2 family.

The protein localises to the mitochondrion. In Paramecium tetraurelia, this protein is Large ribosomal subunit protein uL2m (RPL2).